A 952-amino-acid polypeptide reads, in one-letter code: GATA zinc finger domain-containing protein 5 (952 aa).

Disordered stretches follow at residues 1–36 (MDYQ…DSPS) and 138–197 (PTPL…SPKQ). The span at 10-24 (QISQEFPTDISTTKS) shows a compositional bias: polar residues. Positions 148–157 (SPPPPPPPPA) are enriched in pro residues. Over residues 158-196 (ATTTTTITTTTTTSAGNSTTKNNNNNNNNNNNNNGKSPK) the composition is skewed to low complexity. The segment at 241–266 (CYQCNTSNTPEWRKGPEGPATLCNAC) adopts a GATA-type zinc-finger fold. Disordered stretches follow at residues 380-418 (MTPS…HEQP), 433-478 (LLSS…GGGG), 634-699 (QNNS…NKNN), and 732-816 (QQQE…LSVN). Over residues 393-412 (KTTKTKPKPKSKSKPGKITH) the composition is skewed to basic residues. Over residues 445 to 467 (SSSSSCGTSLNSSLGSSSGTITN) the composition is skewed to low complexity. A compositionally biased stretch (gly residues) spans 468–478 (SGGGSSGGGGG). A compositionally biased stretch (polar residues) spans 634–653 (QNNSFSGPNDQNPYVPSVSL). 3 stretches are compositionally biased toward low complexity: residues 654 to 668 (NSNK…NNNK), 678 to 699 (NNKN…NKNN), and 732 to 745 (QQQE…EQQQ). The segment covering 746-762 (NLSINNSNQTNENEILG) has biased composition (polar residues). Residues 763-814 (TTTTTTTSTATIITSQVPMNLSPNSDDNQSSSNYSTLSDSGSSPTDSFSGLS) are compositionally biased toward low complexity.

This Dictyostelium discoideum (Social amoeba) protein is GATA zinc finger domain-containing protein 5 (gtaE).